The sequence spans 142 residues: General odorant-binding protein 99a (142 aa).

Residues 1–16 (MKVFVAICVLIGLASA) form the signal peptide. 3 disulfide bridges follow: cysteine 33/cysteine 64, cysteine 60/cysteine 116, and cysteine 105/cysteine 125.

The protein belongs to the PBP/GOBP family. Expressed in larval chemosensory organ. Specifically expressed exclusively in a subset of chemosensory sensilla on the third antennal segment.

The protein resides in the secreted. Functionally, present in the aqueous fluid surrounding olfactory sensory dendrites and are thought to aid in the capture and transport of hydrophobic odorants into and through this fluid. The polypeptide is General odorant-binding protein 99a (Obp99a) (Drosophila melanogaster (Fruit fly)).